Reading from the N-terminus, the 126-residue chain is Large-conductance mechanosensitive channel (126 aa).

The next 2 membrane-spanning stretches (helical) occupy residues 14–34 and 66–86; these read VIDLAVGVVIGTAFSAVVNSL and FITTIVNFLIISAALYFLVVV.

The protein belongs to the MscL family. As to quaternary structure, homopentamer.

The protein localises to the cell membrane. Channel that opens in response to stretch forces in the membrane lipid bilayer. May participate in the regulation of osmotic pressure changes within the cell. This Roseiflexus sp. (strain RS-1) protein is Large-conductance mechanosensitive channel.